The sequence spans 86 residues: Small ribosomal subunit protein bS16 (86 aa).

This sequence belongs to the bacterial ribosomal protein bS16 family.

The chain is Small ribosomal subunit protein bS16 from Xylella fastidiosa (strain M23).